An 801-amino-acid chain; its full sequence is MSLLHIAVILPLIFALIIPILYRFFKRIHLGWFVLPVPIVIFIYMLTLIKTTMSGNTVMKTLNWMPHFGMNFDLYLDGLGLLFSLLISGIGSLVVLYSIGYLSKSEQLGNFYCYLLLFMGAMLGVVLSDNVIILYLFWELTSFSSFLLISFWRERQASIYGAQKSLIITVFGGLSLLGGIILLAIPTQSFSIQYMIQHASEIQNSPFFIFAMILIMIGAFTKSAQFPFYIWLPDAMEAPTPVSAYLHSATMVKAGLYLIARMTPIFAASQGWIWTVTLVGLITLFWASLNATKQQDLKGILAFSTVSQLGMIMAMLGIGAISYHYQGDDSKIYAAAFTAAIFHLINHATFKGALFMITGAVDHSTGTRDVKKLGGLLTIMPISFTITVITALSMAGVPPFNGFLSKESFLETTFTASKANLFSVDTLGYLFPIIGIVGSVFTFVYSIKFIMHIFFGQYKPEQLPKKAHEVSILMLLSPAILATLVIVFGLFPGILTNSIIEPATSSINHTVIDDVEFHMFHGLTPAFLSTLVIYILGILLIVTFSYWVKLLQRQPGKLTFNYWYNRSANVIPNYSEKMTNSYVTDYSRNNLVIIFGALILLTFVTVFSVPFNINFKDVSPIRIFEVCIVILLLSAAFLILFAKSRLFSIIMLSAVGYAVSVLFIFFKAPDLALTQFVVESISTALFLLCFYHLPNLNRYNEKRSFQLTNALIAGGVGLSVIIIGLIAYGNRHFESISKFYQEHVYDLAHGKNMVNVILVDFRGMDTLFESSVLGIAGLAVYTMIKLRKKRQTQGNEVKNHE.

Helical transmembrane passes span leucine 4–phenylalanine 25, leucine 30–isoleucine 49, leucine 79–tyrosine 101, leucine 108–leucine 127, valine 131–arginine 153, leucine 166–glutamine 188, phenylalanine 208–isoleucine 230, serine 243–isoleucine 265, glutamine 270–leucine 289, alanine 302–histidine 324, alanine 339–valine 361, leucine 373–alanine 395, tyrosine 429–methionine 451, isoleucine 472–isoleucine 494, alanine 526–valine 548, asparagine 589–phenylalanine 611, isoleucine 621–phenylalanine 641, leucine 646–alanine 668, alanine 672–proline 694, leucine 707–glycine 729, and leucine 767–isoleucine 784.

The protein belongs to the CPA3 antiporters (TC 2.A.63) subunit A family. May form a heterooligomeric complex that consists of seven subunits: mnhA1, mnhB1, mnhC1, mnhD1, mnhE1, mnhF1 and mnhG1.

It localises to the cell membrane. Its activity is regulated as follows. Na(+) extrusion is completely inhibited by the H(+) conductor carbonyl cyanide m-chlorophenylhydrazone (CCCP). In terms of biological role, mnh complex is a Na(+)/H(+) antiporter involved in Na(+) excretion. In Staphylococcus aureus (strain MRSA252), this protein is Na(+)/H(+) antiporter subunit A1 (mnhA1).